Consider the following 209-residue polypeptide: Imidazole glycerol phosphate synthase subunit HisH (209 aa).

The region spanning 1-205 is the Glutamine amidotransferase type-1 domain; sequence MIAIIDYGMG…KGVVETWKSS (205 aa). The Nucleophile role is filled by Cys79. Residues His180 and Glu182 contribute to the active site.

As to quaternary structure, heterodimer of HisH and HisF.

It is found in the cytoplasm. The enzyme catalyses 5-[(5-phospho-1-deoxy-D-ribulos-1-ylimino)methylamino]-1-(5-phospho-beta-D-ribosyl)imidazole-4-carboxamide + L-glutamine = D-erythro-1-(imidazol-4-yl)glycerol 3-phosphate + 5-amino-1-(5-phospho-beta-D-ribosyl)imidazole-4-carboxamide + L-glutamate + H(+). It carries out the reaction L-glutamine + H2O = L-glutamate + NH4(+). It functions in the pathway amino-acid biosynthesis; L-histidine biosynthesis; L-histidine from 5-phospho-alpha-D-ribose 1-diphosphate: step 5/9. Its function is as follows. IGPS catalyzes the conversion of PRFAR and glutamine to IGP, AICAR and glutamate. The HisH subunit catalyzes the hydrolysis of glutamine to glutamate and ammonia as part of the synthesis of IGP and AICAR. The resulting ammonia molecule is channeled to the active site of HisF. In Bacillus anthracis (strain A0248), this protein is Imidazole glycerol phosphate synthase subunit HisH.